A 145-amino-acid chain; its full sequence is Methylglyoxal synthase (145 aa).

The region spanning 1-145 (MNSKKKIALV…YYQKIRKDNF (145 aa)) is the MGS-like domain. Residues His12, Lys16, 38 to 41 (TGTT), and 58 to 59 (SG) each bind substrate. Asp64 (proton donor/acceptor) is an active-site residue. His91 lines the substrate pocket.

It belongs to the methylglyoxal synthase family.

It carries out the reaction dihydroxyacetone phosphate = methylglyoxal + phosphate. Its function is as follows. Catalyzes the formation of methylglyoxal from dihydroxyacetone phosphate. This Clostridium acetobutylicum (strain ATCC 824 / DSM 792 / JCM 1419 / IAM 19013 / LMG 5710 / NBRC 13948 / NRRL B-527 / VKM B-1787 / 2291 / W) protein is Methylglyoxal synthase.